Reading from the N-terminus, the 64-residue chain is MMFRLTSVSCFLLVIVCLNLVVLTNACRLEGSSCRRSYQCCHKSCCIRECKFPCRWDGKRATFQ.

A signal peptide spans 1–26 (MMFRLTSVSCFLLVIVCLNLVVLTNA). 4 cysteine pairs are disulfide-bonded: cysteine 27/cysteine 41, cysteine 34/cysteine 46, cysteine 40/cysteine 50, and cysteine 45/cysteine 54. Aspartate 57 is modified (aspartic acid 1-amide). Positions 61–64 (ATFQ) are excised as a propeptide.

This sequence belongs to the conotoxin I2 superfamily. In terms of tissue distribution, expressed by the venom duct.

It localises to the secreted. This chain is Conotoxin Im11.2, found in Conus imperialis (Imperial cone).